Here is a 78-residue protein sequence, read N- to C-terminus: D-alanyl carrier protein (78 aa).

Positions 1–78 constitute a Carrier domain; that stretch reads MNIQETVLNI…QIIQQVEALQ (78 aa). Ser36 carries the O-(pantetheine 4'-phosphoryl)serine modification.

This sequence belongs to the DltC family. 4'-phosphopantetheine is transferred from CoA to a specific serine of apo-DCP.

It localises to the cytoplasm. It participates in cell wall biogenesis; lipoteichoic acid biosynthesis. Carrier protein involved in the D-alanylation of lipoteichoic acid (LTA). The loading of thioester-linked D-alanine onto DltC is catalyzed by D-alanine--D-alanyl carrier protein ligase DltA. The DltC-carried D-alanyl group is further transferred to cell membrane phosphatidylglycerol (PG) by forming an ester bond, probably catalyzed by DltD. D-alanylation of LTA plays an important role in modulating the properties of the cell wall in Gram-positive bacteria, influencing the net charge of the cell wall. The protein is D-alanyl carrier protein of Enterococcus faecalis (strain ATCC 700802 / V583).